The following is a 341-amino-acid chain: D-erythrose-4-phosphate dehydrogenase (341 aa).

14–15 (RI) is an NAD(+) binding site. Substrate is bound by residues 156-158 (SCT), Arg202, 215-216 (TR), and Arg238. Cys157 serves as the catalytic Nucleophile. Asn320 contributes to the NAD(+) binding site.

Belongs to the glyceraldehyde-3-phosphate dehydrogenase family. Epd subfamily. Homotetramer.

It localises to the cytoplasm. It carries out the reaction D-erythrose 4-phosphate + NAD(+) + H2O = 4-phospho-D-erythronate + NADH + 2 H(+). The protein operates within cofactor biosynthesis; pyridoxine 5'-phosphate biosynthesis; pyridoxine 5'-phosphate from D-erythrose 4-phosphate: step 1/5. In terms of biological role, catalyzes the NAD-dependent conversion of D-erythrose 4-phosphate to 4-phosphoerythronate. In Idiomarina loihiensis (strain ATCC BAA-735 / DSM 15497 / L2-TR), this protein is D-erythrose-4-phosphate dehydrogenase.